Here is a 156-residue protein sequence, read N- to C-terminus: Small ribosomal subunit protein uS7 (156 aa).

It belongs to the universal ribosomal protein uS7 family. In terms of assembly, part of the 30S ribosomal subunit. Contacts proteins S9 and S11.

In terms of biological role, one of the primary rRNA binding proteins, it binds directly to 16S rRNA where it nucleates assembly of the head domain of the 30S subunit. Is located at the subunit interface close to the decoding center, probably blocks exit of the E-site tRNA. The chain is Small ribosomal subunit protein uS7 from Streptococcus sanguinis (strain SK36).